A 169-amino-acid chain; its full sequence is Mediator of RNA polymerase II transcription subunit 28 (169 aa).

Residues 1-35 are disordered; the sequence is MFSAQQPGPPPPNQPGAPAGLMSTPPGAKNPSSTL. Residues 99 to 137 are a coiled coil; sequence EQVIKEDVSELRNELQRKEALIQKHLTKLRSWQQVLEEI.

The protein belongs to the Mediator complex subunit 28 family. As to quaternary structure, component of the Mediator complex.

Its subcellular location is the nucleus. Component of the Mediator complex, a coactivator involved in the regulated transcription of nearly all RNA polymerase II-dependent genes. Mediator functions as a bridge to convey information from gene-specific regulatory proteins to the basal RNA polymerase II transcription machinery. Mediator is recruited to promoters by direct interactions with regulatory proteins and serves as a scaffold for the assembly of a functional preinitiation complex with RNA polymerase II and the general transcription factors. This is Mediator of RNA polymerase II transcription subunit 28 (med28) from Xenopus tropicalis (Western clawed frog).